The chain runs to 322 residues: GTP 3',8-cyclase (322 aa).

Positions 5–233 (KYGRVVDYLR…NAPASIYRLD (229 aa)) constitute a Radical SAM core domain. Residue Arg-14 coordinates GTP. [4Fe-4S] cluster contacts are provided by Cys-21 and Cys-25. Tyr-27 contributes to the S-adenosyl-L-methionine binding site. Cys-28 provides a ligand contact to [4Fe-4S] cluster. GTP is bound at residue Arg-64. Gly-68 serves as a coordination point for S-adenosyl-L-methionine. Residue Thr-95 participates in GTP binding. Ser-119 contacts S-adenosyl-L-methionine. Lys-155 is a binding site for GTP. S-adenosyl-L-methionine is bound at residue Met-189. 2 residues coordinate [4Fe-4S] cluster: Cys-249 and Cys-252. Residue 254–256 (RIR) coordinates GTP. Cys-266 is a [4Fe-4S] cluster binding site.

It belongs to the radical SAM superfamily. MoaA family. Monomer and homodimer. The cofactor is [4Fe-4S] cluster.

The catalysed reaction is GTP + AH2 + S-adenosyl-L-methionine = (8S)-3',8-cyclo-7,8-dihydroguanosine 5'-triphosphate + 5'-deoxyadenosine + L-methionine + A + H(+). The protein operates within cofactor biosynthesis; molybdopterin biosynthesis. Its function is as follows. Catalyzes the cyclization of GTP to (8S)-3',8-cyclo-7,8-dihydroguanosine 5'-triphosphate. The protein is GTP 3',8-cyclase of Campylobacter curvus (strain 525.92).